We begin with the raw amino-acid sequence, 541 residues long: Neutral amino acid transporter B(0) (541 aa).

M1 carries the N-acetylmethionine modification. A compositionally biased stretch (basic and acidic residues) spans 1–10; that stretch reads MVADPPKGDP. The segment at 1-32 is disordered; the sequence is MVADPPKGDPKGLAAVEPTANGAPAQDPLEDS. Over 1–52 the chain is Cytoplasmic; sequence MVADPPKGDPKGLAAVEPTANGAPAQDPLEDSGAAVGRCCSSRDQVRRCLRA. Residues 53 to 82 traverse the membrane as a helical segment; that stretch reads NLLVLLTVVAVVAGVALGLAVSGAGGALAL. At 83–95 the chain is on the extracellular side; sequence GPARLIAFAFPGE. Residues 96 to 117 traverse the membrane as a helical segment; the sequence is LLLRLLKMIILPLVVCSLVGGA. Residues 118–131 are Cytoplasmic-facing; that stretch reads ASLDPSALGRLGAW. A helical transmembrane segment spans residues 132–154; the sequence is ALLFFLVTTLLASALGVGLALAL. The Extracellular portion of the chain corresponds to 155–225; the sequence is QPGAAFAAMN…GTLVKVPVAH (71 aa). N164 and N215 each carry an N-linked (GlcNAc...) asparagine glycan. A helical membrane pass occupies residues 226–249; it reads EEEGMNILGLVVFAIVFGVALRKL. The Cytoplasmic portion of the chain corresponds to 250–258; sequence GPEGEPLIR. The helical transmembrane segment at 259 to 286 threads the bilayer; it reads FFNSFNDATMVLVSWIMWYAPVGILFLV. At 287 to 307 the chain is on the extracellular side; that stretch reads ASKIVEMDDVGVLFASLGKYI. A helical transmembrane segment spans residues 308-329; the sequence is LCCLLGHAIHGLLVLPLIYFLF. Residues 330 to 334 lie on the Cytoplasmic side of the membrane; that stretch reads TRKNP. The segment at residues 335-365 is an intramembrane region (discontinuously helical); that stretch reads YRFLWGILTPLAMAFGTSSSSATLPLMMKCV. Residues 366-374 lie on the Cytoplasmic side of the membrane; it reads EERNGVAKH. Residues 375–401 form a helical membrane-spanning segment; the sequence is ISRFVLPIGATVNMDGAALFQCVAAVF. The Na(+) site is built by G383, T385, and N387. Residues 402–414 lie on the Extracellular side of the membrane; sequence IAQLNRQSLDFVK. The segment at residues 415–448 is an intramembrane region (discontinuously helical); sequence IITILVTATASSVGAAGIPAGGVLTLAIILEAVS. Topologically, residues 449-461 are extracellular; it reads LPVSEISLILAVD. A helical membrane pass occupies residues 462 to 483; sequence WLVDRSCTIINVEGDAFGAGLL. N472 and D476 together coordinate Na(+). At 484 to 541 the chain is on the cytoplasmic side; that stretch reads QHYVDRTEQRGSEPELTQVKSEVPLGSLPAPNEEGNPLLRHSPGAAGDAGACEKESVM. The segment at 493–541 is disordered; sequence RGSEPELTQVKSEVPLGSLPAPNEEGNPLLRHSPGAAGDAGACEKESVM. Phosphoserine occurs at positions 495, 504, and 539.

The protein belongs to the dicarboxylate/amino acid:cation symporter (DAACS) (TC 2.A.23) family. SLC1A5 subfamily. Homotrimer.

It is found in the cell membrane. The protein resides in the melanosome. It catalyses the reaction L-glutamine(out) + L-serine(in) + Na(+)(out) = L-glutamine(in) + L-serine(out) + Na(+)(in). It carries out the reaction L-glutamine(in) + L-serine(out) + Na(+)(out) = L-glutamine(out) + L-serine(in) + Na(+)(in). The catalysed reaction is L-threonine(in) + L-glutamine(out) + Na(+)(out) = L-threonine(out) + L-glutamine(in) + Na(+)(in). The enzyme catalyses L-threonine(out) + L-glutamine(in) + Na(+)(out) = L-threonine(in) + L-glutamine(out) + Na(+)(in). It catalyses the reaction L-asparagine(in) + L-glutamine(out) + Na(+)(out) = L-asparagine(out) + L-glutamine(in) + Na(+)(in). It carries out the reaction L-asparagine(out) + L-glutamine(in) + Na(+)(out) = L-asparagine(in) + L-glutamine(out) + Na(+)(in). The catalysed reaction is L-glutamine(in) + L-alanine(out) + Na(+)(out) = L-glutamine(out) + L-alanine(in) + Na(+)(in). The enzyme catalyses L-valine(out) + L-glutamine(in) + Na(+)(out) = L-valine(in) + L-glutamine(out) + Na(+)(in). It catalyses the reaction L-glutamine(in) + L-methionine(out) + Na(+)(out) = L-glutamine(out) + L-methionine(in) + Na(+)(in). It carries out the reaction L-glutamine(in) + L-glutamate(out) + Na(+)(out) + H(+)(out) = L-glutamine(out) + L-glutamate(in) + Na(+)(in) + H(+)(in). The catalysed reaction is D-serine(in) + L-glutamine(out) + Na(+)(out) = D-serine(out) + L-glutamine(in) + Na(+)(in). The enzyme catalyses D-serine(in) + L-alanine(out) + Na(+)(out) = D-serine(out) + L-alanine(in) + Na(+)(in). It catalyses the reaction nitrate(in) = nitrate(out). It carries out the reaction iodide(out) = iodide(in). The catalysed reaction is thiocyanate(in) = thiocyanate(out). Its function is as follows. Sodium-coupled antiporter of neutral amino acids. In a tri-substrate transport cycle, exchanges neutral amino acids between the extracellular and intracellular compartments, coupled to the inward cotransport of at least one sodium ion. The preferred substrate is the essential amino acid L-glutamine, a precursor for biosynthesis of proteins, nucleotides and amine sugars as well as an alternative fuel for mitochondrial oxidative phosphorylation. Exchanges L-glutamine with other neutral amino acids such as L-serine, L-threonine and L-asparagine in a bidirectional way. Provides L-glutamine to proliferating stem and activated cells driving the metabolic switch toward cell differentiation. The transport cycle is usually pH-independent, with the exception of L-glutamate. Transports extracellular L-glutamate coupled to the cotransport of one proton and one sodium ion in exchange for intracellular L-glutamine counter-ion. May provide for L-glutamate uptake in glial cells regulating glutamine/glutamate cycle in the nervous system. Can transport D-amino acids. Mediates D-serine release from the retinal glia potentially affecting NMDA receptor function in retinal neurons. Displays sodium- and amino acid-dependent but uncoupled channel-like anion conductance with a preference SCN(-) &gt;&gt; NO3(-) &gt; I(-) &gt; Cl(-). Through binding of the fusogenic protein syncytin-1/ERVW-1 may mediate trophoblasts syncytialization, the spontaneous fusion of their plasma membranes, an essential process in placental development. This is Neutral amino acid transporter B(0) (SLC1A5) from Oryctolagus cuniculus (Rabbit).